We begin with the raw amino-acid sequence, 199 residues long: Recombination protein RecR (199 aa).

A C4-type zinc finger spans residues 56 to 71; the sequence is CAICGNVAEHEQCRIC. Residues 79-174 enclose the Toprim domain; that stretch reads TVLCVVEEPK…RVTRLASGLP (96 aa).

This sequence belongs to the RecR family.

In terms of biological role, may play a role in DNA repair. It seems to be involved in an RecBC-independent recombinational process of DNA repair. It may act with RecF and RecO. This chain is Recombination protein RecR, found in Acidothermus cellulolyticus (strain ATCC 43068 / DSM 8971 / 11B).